We begin with the raw amino-acid sequence, 152 residues long: D-erythrulose-4-phosphate isomerase (152 aa).

The active-site Proton acceptor is the cysteine 67.

Belongs to the LacAB/RpiB family.

The catalysed reaction is D-erythrulose 4-phosphate = D-erythrose 4-phosphate. It functions in the pathway carbohydrate metabolism. Functionally, involved in catabolism of D-apiose. Catalyzes the isomerization of D-erythrulose 4-phosphate to D-erythrose 4-phosphate. In Pectobacterium atrosepticum (strain SCRI 1043 / ATCC BAA-672) (Erwinia carotovora subsp. atroseptica), this protein is D-erythrulose-4-phosphate isomerase.